We begin with the raw amino-acid sequence, 266 residues long: Glucosamine-6-phosphate deaminase (266 aa).

Asp-72 serves as the catalytic Proton acceptor; for enolization step. Asp-141 (for ring-opening step) is an active-site residue. His-143 serves as the catalytic Proton acceptor; for ring-opening step. The active-site For ring-opening step is Glu-148.

This sequence belongs to the glucosamine/galactosamine-6-phosphate isomerase family. NagB subfamily. Homohexamer.

It carries out the reaction alpha-D-glucosamine 6-phosphate + H2O = beta-D-fructose 6-phosphate + NH4(+). It participates in amino-sugar metabolism; N-acetylneuraminate degradation; D-fructose 6-phosphate from N-acetylneuraminate: step 5/5. Allosterically activated by N-acetylglucosamine 6-phosphate (GlcNAc6P). In terms of biological role, catalyzes the reversible isomerization-deamination of glucosamine 6-phosphate (GlcN6P) to form fructose 6-phosphate (Fru6P) and ammonium ion. This chain is Glucosamine-6-phosphate deaminase, found in Salmonella typhi.